Reading from the N-terminus, the 451-residue chain is MRLERTSFARRLEGYTEAVSLPAQPVVEGRLLRMVGLTLEAEGLQAAVGSRCNVINESGYHPVQVEAEVMGFSGSKVYLMPVGSLAGIAPGARVVPLPDTGRLPMGMSMLGRVLDGAGRALDGKGGMRAEDWVPMDGPTINPLKRHPISEPLDVGIRSINGLLTVGRGQRLGLFAGTGVGKSVLLGMMTRFTRADIIVVGLIGERGREVKEFIDEILGEEGLKRSVVVASPADDAPLMRLRAAQYCTRIAEYFRDKGKNVLLLMDSLTRYAQAQREIALAIGEPPATKGYPPSVFAKLPKLVERAGNAEAGGGSITAFYTVLSEGDDQQDPIADAARGVLDGHFVLSRRLAEEGHYPAIDIEASISRVMPQVVEAEHLRDAQRFKQLWSRYQQSRDLISVGAYVAGGDPETDLAIARFPVMRQFLRQGLDESESLAESRARLASLLAGGQA.

Position 175-182 (175-182) interacts with ATP; the sequence is AGTGVGKS.

This sequence belongs to the ATPase alpha/beta chains family.

The protein resides in the cytoplasm. The catalysed reaction is ATP + H2O + 4 H(+)(in) = ADP + phosphate + 5 H(+)(out). In terms of biological role, probable catalytic subunit of a protein translocase for flagellum-specific export, or a proton translocase involved in local circuits at the flagellum. The chain is Flagellum-specific ATP synthase (fliI) from Pseudomonas aeruginosa (strain ATCC 15692 / DSM 22644 / CIP 104116 / JCM 14847 / LMG 12228 / 1C / PRS 101 / PAO1).